The chain runs to 396 residues: Putative nickel insertion protein (396 aa).

This sequence belongs to the LarC family.

This chain is Putative nickel insertion protein, found in Methanosarcina mazei (strain ATCC BAA-159 / DSM 3647 / Goe1 / Go1 / JCM 11833 / OCM 88) (Methanosarcina frisia).